The chain runs to 316 residues: Ribosomal RNA small subunit methyltransferase H (316 aa).

Residues 35 to 37 (AGH), Asp55, Phe84, Asp105, and Gln112 each bind S-adenosyl-L-methionine.

It belongs to the methyltransferase superfamily. RsmH family.

It is found in the cytoplasm. It carries out the reaction cytidine(1402) in 16S rRNA + S-adenosyl-L-methionine = N(4)-methylcytidine(1402) in 16S rRNA + S-adenosyl-L-homocysteine + H(+). In terms of biological role, specifically methylates the N4 position of cytidine in position 1402 (C1402) of 16S rRNA. This chain is Ribosomal RNA small subunit methyltransferase H, found in Streptococcus suis (strain 05ZYH33).